Here is a 115-residue protein sequence, read N- to C-terminus: Nucleoid-associated protein NATL1_00191 (115 aa).

The segment at 89–115 (STSTMKERMEDLTGGFKLNLPGMGEES) is disordered.

Belongs to the YbaB/EbfC family. As to quaternary structure, homodimer.

The protein resides in the cytoplasm. It is found in the nucleoid. Binds to DNA and alters its conformation. May be involved in regulation of gene expression, nucleoid organization and DNA protection. This chain is Nucleoid-associated protein NATL1_00191, found in Prochlorococcus marinus (strain NATL1A).